The primary structure comprises 321 residues: Acetyl-coenzyme A carboxylase carboxyl transferase subunit alpha (321 aa).

A CoA carboxyltransferase C-terminal domain is found at 39–293; it reads RLQQKSQTLA…RRALGDSLRQ (255 aa).

The protein belongs to the AccA family. Acetyl-CoA carboxylase is a heterohexamer composed of biotin carboxyl carrier protein (AccB), biotin carboxylase (AccC) and two subunits each of ACCase subunit alpha (AccA) and ACCase subunit beta (AccD).

The protein localises to the cytoplasm. The enzyme catalyses N(6)-carboxybiotinyl-L-lysyl-[protein] + acetyl-CoA = N(6)-biotinyl-L-lysyl-[protein] + malonyl-CoA. The protein operates within lipid metabolism; malonyl-CoA biosynthesis; malonyl-CoA from acetyl-CoA: step 1/1. Functionally, component of the acetyl coenzyme A carboxylase (ACC) complex. First, biotin carboxylase catalyzes the carboxylation of biotin on its carrier protein (BCCP) and then the CO(2) group is transferred by the carboxyltransferase to acetyl-CoA to form malonyl-CoA. The protein is Acetyl-coenzyme A carboxylase carboxyl transferase subunit alpha of Bordetella avium (strain 197N).